A 219-amino-acid chain; its full sequence is Ribose-5-phosphate isomerase A (219 aa).

Substrate is bound by residues 28–31, 81–84, and 94–97; these read SGST, DGAD, and KGGG. The active-site Proton acceptor is Glu103. Residue Lys121 participates in substrate binding.

Belongs to the ribose 5-phosphate isomerase family. Homodimer.

The enzyme catalyses aldehydo-D-ribose 5-phosphate = D-ribulose 5-phosphate. It participates in carbohydrate degradation; pentose phosphate pathway; D-ribose 5-phosphate from D-ribulose 5-phosphate (non-oxidative stage): step 1/1. In terms of biological role, catalyzes the reversible conversion of ribose-5-phosphate to ribulose 5-phosphate. The polypeptide is Ribose-5-phosphate isomerase A (Actinobacillus succinogenes (strain ATCC 55618 / DSM 22257 / CCUG 43843 / 130Z)).